Here is an 87-residue protein sequence, read N- to C-terminus: RNA-binding protein Hfq (87 aa).

The Sm domain occupies 9–68 (DPYLNVLRKERIPVSIYLVNGIKLQGQVESFDQFVVLLKNTVSQMVYKHAISTVVPSRPV).

It belongs to the Hfq family. As to quaternary structure, homohexamer.

In terms of biological role, RNA chaperone that binds small regulatory RNA (sRNAs) and mRNAs to facilitate mRNA translational regulation in response to envelope stress, environmental stress and changes in metabolite concentrations. Also binds with high specificity to tRNAs. In Teredinibacter turnerae (strain ATCC 39867 / T7901), this protein is RNA-binding protein Hfq.